We begin with the raw amino-acid sequence, 90 residues long: Phosphoribosyl-ATP pyrophosphatase (90 aa).

It belongs to the PRA-PH family.

The protein resides in the cytoplasm. The enzyme catalyses 1-(5-phospho-beta-D-ribosyl)-ATP + H2O = 1-(5-phospho-beta-D-ribosyl)-5'-AMP + diphosphate + H(+). The protein operates within amino-acid biosynthesis; L-histidine biosynthesis; L-histidine from 5-phospho-alpha-D-ribose 1-diphosphate: step 2/9. The protein is Phosphoribosyl-ATP pyrophosphatase of Streptomyces griseus subsp. griseus (strain JCM 4626 / CBS 651.72 / NBRC 13350 / KCC S-0626 / ISP 5235).